A 130-amino-acid chain; its full sequence is Small ribosomal subunit protein uS11 (130 aa).

It belongs to the universal ribosomal protein uS11 family. As to quaternary structure, part of the 30S ribosomal subunit. Interacts with proteins S7 and S18. Binds to IF-3.

Its function is as follows. Located on the platform of the 30S subunit, it bridges several disparate RNA helices of the 16S rRNA. Forms part of the Shine-Dalgarno cleft in the 70S ribosome. The polypeptide is Small ribosomal subunit protein uS11 (Gloeothece citriformis (strain PCC 7424) (Cyanothece sp. (strain PCC 7424))).